The primary structure comprises 470 residues: MAKTIIEKIWESHTVVDESGKPNLLYVDLHMVHEVTSPQAFEGLRLAGRTVRRPDKTFATMDHNVPTVNRYDIRDQIARTQMETLAANCKQFGIEMVDLDHPENGIVHVIGPELGLTQPGHVIVCGDSHTSTHGAFGAIAFGIGTSEVEHVLATQTIWQSKPKTLEVHISGRLNEGISAKDVILAIIAKFGVDIGTGSIIEFTGEAIRGMTMEERMTICNMSIEAGAKAGLISPDQVTFDYLQGRANVPKGEAYDEIVEKWAQLATDPGATYDRSVTIDAAEIEPMVTWGTNPGQGAGISKAVPRLDDAKSEVERRAISQALDYMDIKPGTPLSEIEIQHVFIGSCTNSRLSDLRAAAAVINGRKVAPGVRALIVPGSQRVKKRAEEEGLDQVFKEAGFEWRDSGCSMCLSMNPDVVPEGERCASTSNRNFEGRQGKGARTHLVSPAMAAAAAIAGRFVDVRKMVKAGEC.

The [4Fe-4S] cluster site is built by C346, C406, and C409.

The protein belongs to the aconitase/IPM isomerase family. LeuC type 1 subfamily. As to quaternary structure, heterodimer of LeuC and LeuD. It depends on [4Fe-4S] cluster as a cofactor.

The catalysed reaction is (2R,3S)-3-isopropylmalate = (2S)-2-isopropylmalate. The protein operates within amino-acid biosynthesis; L-leucine biosynthesis; L-leucine from 3-methyl-2-oxobutanoate: step 2/4. Catalyzes the isomerization between 2-isopropylmalate and 3-isopropylmalate, via the formation of 2-isopropylmaleate. The sequence is that of 3-isopropylmalate dehydratase large subunit from Shouchella clausii (strain KSM-K16) (Alkalihalobacillus clausii).